Here is a 245-residue protein sequence, read N- to C-terminus: Tetraspanin-6 (245 aa).

The Cytoplasmic portion of the chain corresponds to 1-19; sequence MASPSRRLQTKPVITCFKS. Residues 20 to 40 traverse the membrane as a helical segment; that stretch reads VLLIYTFIFWITGVILLAVGI. The Extracellular portion of the chain corresponds to 41–59; it reads WGKVSLENYFSLLNEKATN. A helical membrane pass occupies residues 60-80; sequence VPFVLIATGTVIILLGTFGCF. The Cytoplasmic portion of the chain corresponds to 81–93; the sequence is ATCRASAWMLKLY. A helical membrane pass occupies residues 94–114; it reads AMFLTLVFLVELVAAIVGFVF. At 115 to 208 the chain is on the extracellular side; that stretch reads RHEIKNSFKN…IKVMTIIESE (94 aa). N-linked (GlcNAc...) asparagine glycosylation is present at Asn-134. Residues 209–229 form a helical membrane-spanning segment; that stretch reads MGVVAGISFGVACFQLIGIFL. At 230–245 the chain is on the cytoplasmic side; that stretch reads AYCLSRAITNNQYEIV.

The protein belongs to the tetraspanin (TM4SF) family.

Its subcellular location is the membrane. In Homo sapiens (Human), this protein is Tetraspanin-6 (TSPAN6).